The primary structure comprises 25 residues: Pregnancy-associated glycoprotein 59g (25 aa).

N-linked (GlcNAc...) asparagine glycosylation occurs at N4.

It belongs to the peptidase A1 family. In terms of tissue distribution, highly expressed in the placenta between day 60 and day 100 of gestation.

It localises to the secreted. It is found in the extracellular space. The sequence is that of Pregnancy-associated glycoprotein 59g from Ovis aries (Sheep).